A 358-amino-acid chain; its full sequence is Mannonate dehydratase (358 aa).

The protein belongs to the mannonate dehydratase family. Requires Fe(2+) as cofactor. It depends on Mn(2+) as a cofactor.

The catalysed reaction is D-mannonate = 2-dehydro-3-deoxy-D-gluconate + H2O. It functions in the pathway carbohydrate metabolism; pentose and glucuronate interconversion. Catalyzes the dehydration of D-mannonate. The protein is Mannonate dehydratase of Shouchella clausii (strain KSM-K16) (Alkalihalobacillus clausii).